A 367-amino-acid chain; its full sequence is tRNA/tmRNA (uracil-C(5))-methyltransferase (367 aa).

S-adenosyl-L-methionine-binding residues include Q190, Y218, N223, E239, and D299. Residue C324 is the Nucleophile of the active site. Catalysis depends on E358, which acts as the Proton acceptor.

It belongs to the class I-like SAM-binding methyltransferase superfamily. RNA M5U methyltransferase family. TrmA subfamily.

The enzyme catalyses uridine(54) in tRNA + S-adenosyl-L-methionine = 5-methyluridine(54) in tRNA + S-adenosyl-L-homocysteine + H(+). It carries out the reaction uridine(341) in tmRNA + S-adenosyl-L-methionine = 5-methyluridine(341) in tmRNA + S-adenosyl-L-homocysteine + H(+). Dual-specificity methyltransferase that catalyzes the formation of 5-methyluridine at position 54 (m5U54) in all tRNAs, and that of position 341 (m5U341) in tmRNA (transfer-mRNA). This Pectobacterium carotovorum subsp. carotovorum (strain PC1) protein is tRNA/tmRNA (uracil-C(5))-methyltransferase.